The primary structure comprises 184 residues: Ribosome-recycling factor (184 aa).

Belongs to the RRF family.

The protein localises to the cytoplasm. Functionally, responsible for the release of ribosomes from messenger RNA at the termination of protein biosynthesis. May increase the efficiency of translation by recycling ribosomes from one round of translation to another. This is Ribosome-recycling factor from Mycoplasma pneumoniae (strain ATCC 29342 / M129 / Subtype 1) (Mycoplasmoides pneumoniae).